The sequence spans 75 residues: Metallothionein-like protein 1 (75 aa).

The protein belongs to the metallothionein superfamily. Type 15 family.

In terms of biological role, metallothioneins have a high content of cysteine residues that bind various heavy metals. The chain is Metallothionein-like protein 1 (MT1B) from Trifolium repens (Creeping white clover).